Reading from the N-terminus, the 633-residue chain is Chaperone protein dnaK2 (633 aa).

Thr-197 is modified (phosphothreonine; by autocatalysis). The tract at residues 600–633 (SNAASQAADGTSSESNNSTEGNDDVIDAEFTESK) is disordered. Low complexity predominate over residues 608 to 619 (DGTSSESNNSTE). Over residues 620–633 (GNDDVIDAEFTESK) the composition is skewed to acidic residues.

Belongs to the heat shock protein 70 family.

Acts as a chaperone. The protein is Chaperone protein dnaK2 (dnaK2) of Prochlorococcus marinus (strain SARG / CCMP1375 / SS120).